Reading from the N-terminus, the 290-residue chain is 4-hydroxy-tetrahydrodipicolinate synthase (290 aa).

Pyruvate is bound at residue Thr48. The active-site Proton donor/acceptor is the Tyr137. Residue Lys165 is the Schiff-base intermediate with substrate of the active site. A pyruvate-binding site is contributed by Ile206.

It belongs to the DapA family. As to quaternary structure, homotetramer; dimer of dimers.

It localises to the cytoplasm. The enzyme catalyses L-aspartate 4-semialdehyde + pyruvate = (2S,4S)-4-hydroxy-2,3,4,5-tetrahydrodipicolinate + H2O + H(+). It functions in the pathway amino-acid biosynthesis; L-lysine biosynthesis via DAP pathway; (S)-tetrahydrodipicolinate from L-aspartate: step 3/4. Functionally, catalyzes the condensation of (S)-aspartate-beta-semialdehyde [(S)-ASA] and pyruvate to 4-hydroxy-tetrahydrodipicolinate (HTPA). The chain is 4-hydroxy-tetrahydrodipicolinate synthase from Enterococcus faecalis (strain ATCC 700802 / V583).